Consider the following 459-residue polypeptide: Putrescine aminotransferase (459 aa).

Pyridoxal 5'-phosphate is bound by residues 150 to 151 (GT) and glutamine 274. Lysine 300 carries the post-translational modification N6-(pyridoxal phosphate)lysine. Threonine 332 serves as a coordination point for pyridoxal 5'-phosphate.

This sequence belongs to the class-III pyridoxal-phosphate-dependent aminotransferase family. Putrescine aminotransferase subfamily. Pyridoxal 5'-phosphate is required as a cofactor.

It carries out the reaction an alkane-alpha,omega-diamine + 2-oxoglutarate = an omega-aminoaldehyde + L-glutamate. The catalysed reaction is putrescine + 2-oxoglutarate = 1-pyrroline + L-glutamate + H2O. The enzyme catalyses cadaverine + 2-oxoglutarate = 5-aminopentanal + L-glutamate. It participates in amine and polyamine degradation; putrescine degradation; 4-aminobutanal from putrescine (transaminase route): step 1/1. Its function is as follows. Catalyzes the aminotransferase reaction from putrescine to 2-oxoglutarate, leading to glutamate and 4-aminobutanal, which spontaneously cyclizes to form 1-pyrroline. This is the first step in one of two pathways for putrescine degradation, where putrescine is converted into 4-aminobutanoate (gamma-aminobutyrate or GABA) via 4-aminobutanal. Also functions as a cadaverine transaminase in a a L-lysine degradation pathway to succinate that proceeds via cadaverine, glutarate and L-2-hydroxyglutarate. This chain is Putrescine aminotransferase, found in Salmonella dublin (strain CT_02021853).